The following is a 102-amino-acid chain: Protein GOLVEN 4 (102 aa).

Residues 1–27 (MEMKKWSYANLITLALLFLFFIILLLA) form the signal peptide. Positions 28 to 89 (FQGGSRDDDH…QEREVYVELR (62 aa)) are excised as a propeptide. The disordered stretch occupies residues 56 to 78 (KSLKPINPTKKNGFEYPDQGSHD). At tyrosine 91 the chain carries Sulfotyrosine. Proline 99 carries the hydroxyproline modification.

This sequence belongs to the RGF family. In terms of assembly, binds to LRR receptor-like serine/threonine-protein kinases to trigger their dimerization with SERK proteins and subsequent signaling. As to expression, expressed in roots and sepals.

The protein resides in the secreted. Its function is as follows. Signaling peptide (root growth factor) that promotes root hairs formation and growth. Maintains the postembryonic root stem cell niche. Regulates the pattern of root growth and lateral root development by modulating the length and the number of cortical cells in the root apical meristem (RAM), and the anticlinal asymmetric cell divisions in lateral root initiation cells. The polypeptide is Protein GOLVEN 4 (Arabidopsis thaliana (Mouse-ear cress)).